A 216-amino-acid polypeptide reads, in one-letter code: Octanoyltransferase (216 aa).

The region spanning 24–212 is the BPL/LPL catalytic domain; it reads KFRKECILFL…NLCSFLEPIN (189 aa). Substrate is bound by residues 69-76, 140-142, and 153-155; these read RGGDFTAH, SIG, and GIA. The active-site Acyl-thioester intermediate is the Cys171.

Belongs to the LipB family.

It is found in the cytoplasm. It catalyses the reaction octanoyl-[ACP] + L-lysyl-[protein] = N(6)-octanoyl-L-lysyl-[protein] + holo-[ACP] + H(+). Its pathway is protein modification; protein lipoylation via endogenous pathway; protein N(6)-(lipoyl)lysine from octanoyl-[acyl-carrier-protein]: step 1/2. Functionally, catalyzes the transfer of endogenously produced octanoic acid from octanoyl-acyl-carrier-protein onto the lipoyl domains of lipoate-dependent enzymes. Lipoyl-ACP can also act as a substrate although octanoyl-ACP is likely to be the physiological substrate. The sequence is that of Octanoyltransferase from Leptospira interrogans serogroup Icterohaemorrhagiae serovar Lai (strain 56601).